A 275-amino-acid polypeptide reads, in one-letter code: Probable 2' cyclic ADP-D-ribose synthase TcpB (275 aa).

Residues 17–32 (RLKADDSREMSKEKQA) show a composition bias toward basic and acidic residues. Positions 17-66 (RLKADDSREMSKEKQAQSKAHKAQQAISSAKSLSTQKSKMSELERATRDG) are disordered. The span at 39–48 (AQQAISSAKS) shows a compositional bias: low complexity. Basic and acidic residues predominate over residues 55–64 (KMSELERATR). A TIR domain is found at 142–275 (EEYDFFISHA…EIAKELHSLI (134 aa)). NAD(+)-binding positions include 151–152 (AS) and K181. E217 is an active-site residue.

In terms of assembly, homodimer. Interacts with host TIRAP, and probably host MYD88. Interacts with host TLR4, abolishes the interaction of host TIRAP with TLR4.

The protein localises to the secreted. Its subcellular location is the host cell membrane. The enzyme catalyses NAD(+) + H2O = ADP-D-ribose + nicotinamide + H(+). The catalysed reaction is NAD(+) = 2'cADPR + nicotinamide + H(+). Its function is as follows. Virulence factor that interferes with host Toll-like receptor 2 (TLR2) and TLR4 signaling, resulting in the reduction of dendritic cell maturation, inhibition of pro-inflammatory cytokine secretion and impaired NF-kappa-B activation in macrophages. Binds host lipids. Has NAD(+) hydrolase (NADase) activity, catalyzes cleavage of NAD(+) into ADP-D-ribose (ADPR) and nicotinamide, also generates a cyclization variant of cyclic ADPR (cADPR), termed v-cADPR (probably 2'cADPR). This Brucella melitensis biotype 2 (strain ATCC 23457) protein is Probable 2' cyclic ADP-D-ribose synthase TcpB (tcpB).